A 288-amino-acid polypeptide reads, in one-letter code: NAD kinase (288 aa).

The Proton acceptor role is filled by D70. Residues 70 to 71 (DG), 144 to 145 (ND), R155, K172, D174, 185 to 190 (TGYSLS), and Q245 each bind NAD(+).

Belongs to the NAD kinase family. It depends on a divalent metal cation as a cofactor.

The protein localises to the cytoplasm. The catalysed reaction is NAD(+) + ATP = ADP + NADP(+) + H(+). Its function is as follows. Involved in the regulation of the intracellular balance of NAD and NADP, and is a key enzyme in the biosynthesis of NADP. Catalyzes specifically the phosphorylation on 2'-hydroxyl of the adenosine moiety of NAD to yield NADP. This Citrifermentans bemidjiense (strain ATCC BAA-1014 / DSM 16622 / JCM 12645 / Bem) (Geobacter bemidjiensis) protein is NAD kinase.